The chain runs to 311 residues: MEFSHVPVLLNETIEHLNLKAGGVYVDATLGGGGHSEEILKRADCRVVGLDQDEDALNHAAKRLAPFGDRFIPVKSNFRNIRKVVYRLGLDAVDGVLMDLGVSSFQLDNPLKGFSFQHDGPLDMRMDPQNPKTAADVVNTYPEKELIRIFYEYGEERYAPQIARAIVKRREKKPFTSTLELAEEIIRAVPAKARREKHPAKRVFQAIRIEVNDELSSLEEGLVGAVEVLKPGGRIVVITFHSLEDRLVKNFFRREENPCICPKDFPMCVCGKKPRLKVITKKPLVPSEEEIEKNRRAHSAKLRAAEKLSFA.

Residues 33-35 (GGH), Asp51, Phe78, Asp99, and Gln106 each bind S-adenosyl-L-methionine. Positions 289–311 (EEIEKNRRAHSAKLRAAEKLSFA) are disordered.

The protein belongs to the methyltransferase superfamily. RsmH family.

It is found in the cytoplasm. It carries out the reaction cytidine(1402) in 16S rRNA + S-adenosyl-L-methionine = N(4)-methylcytidine(1402) in 16S rRNA + S-adenosyl-L-homocysteine + H(+). Specifically methylates the N4 position of cytidine in position 1402 (C1402) of 16S rRNA. The chain is Ribosomal RNA small subunit methyltransferase H from Carboxydothermus hydrogenoformans (strain ATCC BAA-161 / DSM 6008 / Z-2901).